The sequence spans 493 residues: Involucrin (493 aa).

Disordered regions lie at residues 1–47, 60–123, and 139–493; these read MSQQ…CQKV, EEKH…GQLE, and KRDE…GQHE. Residues 76-89 show a composition bias toward low complexity; it reads EQQQPQEQELQQQH. Basic and acidic residues-rich tracts occupy residues 90 to 116, 139 to 151, 161 to 174, 184 to 193, and 201 to 213; these read WEQDKEHQKAENPEQQLKQEKVQREKQ, KRDEQLGTKKEQL, QLKHLEQEEGHLEL, NLEHQEKPLE, and QLKHLEQQEKPLE. Polar residues predominate over residues 228–240; that stretch reads QEGQSELPEQQRG. 5 stretches are compositionally biased toward basic and acidic residues: residues 250–270, 282–360, 372–386, 411–431, and 439–450; these read GQLKHLEEQKGQLKHLEHEEG, KHLE…HEGQ, KHLEQEEKQLEHPEQ, KHLEQQEKQLEHPQQQEEQLK, and QLKDLEQQERQL. The span at 473–493 shows a compositional bias: low complexity; the sequence is GEVLLPVEQQQQKQEVQGQHE.

It belongs to the involucrin family. Directly or indirectly cross-linked to cornifelin (CNFN). Substrate of transglutaminase. Specific glutamines or lysines are cross-linked to keratins, desmoplakin and to inter involucrin molecules. Keratinocytes of epidermis and other stratified squamous epithelia.

The protein resides in the cytoplasm. Part of the insoluble cornified cell envelope (CE) of stratified squamous epithelia. The chain is Involucrin (IVL) from Saguinus oedipus (Cotton-top tamarin).